Here is a 401-residue protein sequence, read N- to C-terminus: 1-deoxy-D-xylulose 5-phosphate reductoisomerase (401 aa).

NADPH is bound by residues threonine 11, glycine 12, serine 13, isoleucine 14, arginine 38, asparagine 39, and asparagine 125. Lysine 126 is a 1-deoxy-D-xylulose 5-phosphate binding site. Glutamate 127 lines the NADPH pocket. Position 151 (aspartate 151) interacts with Mn(2+). Positions 152, 153, 179, and 202 each coordinate 1-deoxy-D-xylulose 5-phosphate. Mn(2+) is bound at residue glutamate 153. Glycine 208 contributes to the NADPH binding site. Residues serine 215, asparagine 220, lysine 221, and glutamate 224 each contribute to the 1-deoxy-D-xylulose 5-phosphate site. A Mn(2+)-binding site is contributed by glutamate 224.

It belongs to the DXR family. Requires Mg(2+) as cofactor. The cofactor is Mn(2+).

The catalysed reaction is 2-C-methyl-D-erythritol 4-phosphate + NADP(+) = 1-deoxy-D-xylulose 5-phosphate + NADPH + H(+). It functions in the pathway isoprenoid biosynthesis; isopentenyl diphosphate biosynthesis via DXP pathway; isopentenyl diphosphate from 1-deoxy-D-xylulose 5-phosphate: step 1/6. Its function is as follows. Catalyzes the NADPH-dependent rearrangement and reduction of 1-deoxy-D-xylulose-5-phosphate (DXP) to 2-C-methyl-D-erythritol 4-phosphate (MEP). The protein is 1-deoxy-D-xylulose 5-phosphate reductoisomerase of Paraburkholderia phytofirmans (strain DSM 17436 / LMG 22146 / PsJN) (Burkholderia phytofirmans).